The sequence spans 165 residues: LIM domain transcription factor LMO4.2 (165 aa).

LIM zinc-binding domains lie at 21–83 and 85–147; these read KRCA…LFGN and GACS…ALIN.

Its function is as follows. Acts as a positive cofactor of GATA transcription factors to establish the identity of the ventral mesoderm during gastrulation. Down-regulation in the dorsal mesoderm is necessary for the proper formation of this territory since, when present, lmo4 may bind ldb1 and restrict the availability of this cofactor for Spemman organizer transcription factors. At neurula stages, suppresses primary neuron differentiation and modulates gene expression at the Isthmic Organizer of the midbrain-hindbrain boundary. This Xenopus tropicalis (Western clawed frog) protein is LIM domain transcription factor LMO4.2 (lmo4.2).